A 1342-amino-acid chain; its full sequence is DNA-directed RNA polymerase subunit beta (1342 aa).

N6-acetyllysine is present on residues K1022 and K1200.

The protein belongs to the RNA polymerase beta chain family. As to quaternary structure, the RNAP catalytic core consists of 2 alpha, 1 beta, 1 beta' and 1 omega subunit. When a sigma factor is associated with the core the holoenzyme is formed, which can initiate transcription.

It carries out the reaction RNA(n) + a ribonucleoside 5'-triphosphate = RNA(n+1) + diphosphate. In terms of biological role, DNA-dependent RNA polymerase catalyzes the transcription of DNA into RNA using the four ribonucleoside triphosphates as substrates. This chain is DNA-directed RNA polymerase subunit beta, found in Shigella dysenteriae serotype 1 (strain Sd197).